The sequence spans 75 residues: Small ribosomal subunit protein bS18 (75 aa).

Belongs to the bacterial ribosomal protein bS18 family. Part of the 30S ribosomal subunit. Forms a tight heterodimer with protein bS6.

Its function is as follows. Binds as a heterodimer with protein bS6 to the central domain of the 16S rRNA, where it helps stabilize the platform of the 30S subunit. In Hydrogenovibrio crunogenus (strain DSM 25203 / XCL-2) (Thiomicrospira crunogena), this protein is Small ribosomal subunit protein bS18.